The sequence spans 167 residues: Ribosome maturation factor RimM (167 aa).

The PRC barrel domain occupies 94–165 (ENEFYYSDII…KIIITPMEGL (72 aa)).

Belongs to the RimM family. As to quaternary structure, binds ribosomal protein uS19.

Its subcellular location is the cytoplasm. In terms of biological role, an accessory protein needed during the final step in the assembly of 30S ribosomal subunit, possibly for assembly of the head region. Essential for efficient processing of 16S rRNA. May be needed both before and after RbfA during the maturation of 16S rRNA. It has affinity for free ribosomal 30S subunits but not for 70S ribosomes. The chain is Ribosome maturation factor RimM from Staphylococcus aureus (strain NCTC 8325 / PS 47).